The sequence spans 428 residues: Glutamate-1-semialdehyde 2,1-aminomutase (428 aa).

The residue at position 267 (Lys-267) is an N6-(pyridoxal phosphate)lysine.

Belongs to the class-III pyridoxal-phosphate-dependent aminotransferase family. HemL subfamily. As to quaternary structure, homodimer. Pyridoxal 5'-phosphate is required as a cofactor.

The protein resides in the cytoplasm. The catalysed reaction is (S)-4-amino-5-oxopentanoate = 5-aminolevulinate. The protein operates within porphyrin-containing compound metabolism; protoporphyrin-IX biosynthesis; 5-aminolevulinate from L-glutamyl-tRNA(Glu): step 2/2. It participates in porphyrin-containing compound metabolism; chlorophyll biosynthesis. The chain is Glutamate-1-semialdehyde 2,1-aminomutase from Prochlorococcus marinus (strain MIT 9303).